The sequence spans 251 residues: 1-(5-phosphoribosyl)-5-[(5-phosphoribosylamino)methylideneamino] imidazole-4-carboxamide isomerase (251 aa).

D8 functions as the Proton acceptor in the catalytic mechanism. The active-site Proton donor is D131.

Belongs to the HisA/HisF family.

The protein resides in the cytoplasm. The enzyme catalyses 1-(5-phospho-beta-D-ribosyl)-5-[(5-phospho-beta-D-ribosylamino)methylideneamino]imidazole-4-carboxamide = 5-[(5-phospho-1-deoxy-D-ribulos-1-ylimino)methylamino]-1-(5-phospho-beta-D-ribosyl)imidazole-4-carboxamide. It functions in the pathway amino-acid biosynthesis; L-histidine biosynthesis; L-histidine from 5-phospho-alpha-D-ribose 1-diphosphate: step 4/9. The chain is 1-(5-phosphoribosyl)-5-[(5-phosphoribosylamino)methylideneamino] imidazole-4-carboxamide isomerase from Burkholderia pseudomallei (strain 1710b).